Consider the following 480-residue polypeptide: Probable G-protein coupled receptor Mth-like 6 (480 aa).

A signal peptide spans 1–20 (MLLNILAIILVFVISSQSEA). Over 21-202 (VIPGCDYFDT…LEHVYIPKSM (182 aa)) the chain is Extracellular. 4 disulfide bridges follow: cysteine 25/cysteine 78, cysteine 80/cysteine 85, cysteine 89/cysteine 179, and cysteine 90/cysteine 101. N-linked (GlcNAc...) asparagine glycosylation is present at asparagine 40. N-linked (GlcNAc...) asparagine glycosylation is found at asparagine 160 and asparagine 170. The chain crosses the membrane as a helical span at residues 203–225 (PAVPQVGTISMVGCILTIAVYLY). Residues 226-231 (IKKLRN) lie on the Cytoplasmic side of the membrane. A helical membrane pass occupies residues 232 to 254 (LLGKCFICYVFCKFVQYLIWAGG). Over 255-263 (DLNLWNNIC) the chain is Extracellular. Residues 264 to 283 (SLAGYTNYFFALASHFWLSV) traverse the membrane as a helical segment. Residues 284–303 (MSHQIWKNLRLINRDERSYH) lie on the Cytoplasmic side of the membrane. Residues 304–326 (FLIYNIYGWGTPAIMTAITYLVD) form a helical membrane-spanning segment. Residues 327–356 (WAWEDRPDKLNWIPGVGLYRCWINTYDWSA) are Extracellular-facing. A helical transmembrane segment spans residues 357–379 (MIYLYGPMLILSLFNVVTFILTV). The Cytoplasmic segment spans residues 380-405 (NHIMKIKSSVKSSTQQQRKCIQNNDF). The helical transmembrane segment at 406–428 (LLYLRLSVMMGVTGISEVITYFV) threads the bilayer. The Extracellular portion of the chain corresponds to 429 to 437 (KRHKFWRQV). The chain crosses the membrane as a helical span at residues 438–457 (LRVPNFFHLGSGIVVFVLFI). Topologically, residues 458 to 480 (LKRSTFQMIMERISGPRRQQPAS) are cytoplasmic.

Belongs to the G-protein coupled receptor 2 family. Mth subfamily.

The protein localises to the cell membrane. This is Probable G-protein coupled receptor Mth-like 6 (mthl6) from Drosophila melanogaster (Fruit fly).